Here is a 525-residue protein sequence, read N- to C-terminus: MSL complex subunit 3 (525 aa).

The 60-residue stretch at 13–72 (SGEKVLCFEPDPTKARVLYDAKIIDVIIGKDEKGRKIPEYLIHFNGWNRSWDRWAAEEHV) folds into the Tudor-knot domain. Disordered regions lie at residues 119 to 148 (KEKS…KEHR) and 302 to 383 (TTTT…DTSA). The segment covering 136 to 146 (SCGEKNGGIKE) has biased composition (basic and acidic residues). The 350-residue stretch at 172–521 (DERTITIDIP…CEAHYSTKNP (350 aa)) folds into the MRG domain. The required for the histone acetyltransferase activity of the MSL complex stretch occupies residues 294–444 (FFLPIKESTT…WKLVPDNYPP (151 aa)). Phosphoserine occurs at positions 313 and 315. The span at 320-332 (NPSTPQSTESQPP) shows a compositional bias: low complexity. S371 and S404 each carry phosphoserine. T409 is modified (phosphothreonine). 2 positions are modified to phosphoserine: S411 and S415.

In terms of assembly, component of the MSL histone acetyltransferase complex at least composed of the KAT8/MOF, MSL1/hampin, MSL2 and MSL3. Interacts (via the MRG domain) with MSL1 and KAT8/MOF. As to expression, in testis, expression is mostly restricted to the spermatocyte stage and only in a small portion of spermatogonia.

The protein localises to the nucleus. Functionally, non-catalytic component of the MSL histone acetyltransferase complex, a multiprotein complex that mediates the majority of histone H4 acetylation at 'Lys-16' (H4K16ac), an epigenetic mark that prevents chromatin compaction. The MSL complex is required for chromosome stability and genome integrity by maintaining homeostatic levels of H4K16ac. The MSL complex is also involved in gene dosage by promoting up-regulation of genes expressed by the X chromosome. X up-regulation is required to compensate for autosomal biallelic expression. The MSL complex also participates in gene dosage compensation by promoting expression of Tsix non-coding RNA. Acts as a histone reader that specifically recognizes and binds histone H4 monomethylated at 'Lys-20' (H4K20Me1) in a DNA-dependent manner and is proposed to be involved in chromosomal targeting of the MSL complex. May play a role X inactivation in females. This Mus musculus (Mouse) protein is MSL complex subunit 3.